A 298-amino-acid polypeptide reads, in one-letter code: Glutamyl-Q tRNA(Asp) synthetase (298 aa).

Residues 8–12 and Glu-44 contribute to the L-glutamate site; that span reads RFAPS. Positions 11 to 21 match the 'HIGH' region motif; the sequence is PSPTGPLHFGS. Residues Cys-100, Cys-102, Tyr-123, and Cys-127 each contribute to the Zn(2+) site. L-glutamate contacts are provided by Tyr-183 and Arg-201. The 'KMSKS' region motif lies at 239 to 243; the sequence is KLSKQ. Lys-242 contributes to the ATP binding site.

It belongs to the class-I aminoacyl-tRNA synthetase family. GluQ subfamily. The cofactor is Zn(2+).

Catalyzes the tRNA-independent activation of glutamate in presence of ATP and the subsequent transfer of glutamate onto a tRNA(Asp). Glutamate is transferred on the 2-amino-5-(4,5-dihydroxy-2-cyclopenten-1-yl) moiety of the queuosine in the wobble position of the QUC anticodon. This chain is Glutamyl-Q tRNA(Asp) synthetase, found in Burkholderia orbicola (strain AU 1054).